The chain runs to 351 residues: Photosystem II D2 protein (351 aa).

The chain crosses the membrane as a helical span at residues 39–59 (CAFLALGGWLTGTTFVTSWYT). Histidine 116 contributes to the chlorophyll a binding site. A helical transmembrane segment spans residues 123 to 139 (GFMLRQFEIARLVGIRP). Glutamine 128 and asparagine 141 together coordinate pheophytin a. Residues 151 to 164 (VFVSVFLMYPLGQS) traverse the membrane as a helical segment. Histidine 196 serves as a coordination point for chlorophyll a. The chain crosses the membrane as a helical span at residues 206-226 (GALLCAIHGATVENTLFEDGD). 2 residues coordinate a plastoquinone: histidine 213 and phenylalanine 260. A Fe cation-binding site is contributed by histidine 213. Histidine 267 provides a ligand contact to Fe cation. The helical transmembrane segment at 277–293 (GLWMSAVGIVGLALNLR) threads the bilayer.

Belongs to the reaction center PufL/M/PsbA/D family. In terms of assembly, PSII is composed of 1 copy each of membrane proteins PsbA, PsbB, PsbC, PsbD, PsbE, PsbF, PsbH, PsbI, PsbJ, PsbK, PsbL, PsbM, PsbT, PsbX, PsbY, PsbZ, Psb30/Ycf12, peripheral proteins PsbO, CyanoQ (PsbQ), PsbU, PsbV and a large number of cofactors. It forms dimeric complexes. The D1/D2 heterodimer binds P680, chlorophylls that are the primary electron donor of PSII, and subsequent electron acceptors. It shares a non-heme iron and each subunit binds pheophytin, quinone, additional chlorophylls, carotenoids and lipids. There is also a Cl(-1) ion associated with D1 and D2, which is required for oxygen evolution. The PSII complex binds additional chlorophylls, carotenoids and specific lipids. is required as a cofactor.

It localises to the cellular thylakoid membrane. It carries out the reaction 2 a plastoquinone + 4 hnu + 2 H2O = 2 a plastoquinol + O2. Functionally, photosystem II (PSII) is a light-driven water:plastoquinone oxidoreductase that uses light energy to abstract electrons from H(2)O, generating O(2) and a proton gradient subsequently used for ATP formation. It consists of a core antenna complex that captures photons, and an electron transfer chain that converts photonic excitation into a charge separation. The D1/D2 (PsbA/PsbD) reaction center heterodimer binds P680, the primary electron donor of PSII as well as several subsequent electron acceptors. D2 is needed for assembly of a stable PSII complex. The polypeptide is Photosystem II D2 protein (Nostoc punctiforme (strain ATCC 29133 / PCC 73102)).